A 697-amino-acid polypeptide reads, in one-letter code: Polyribonucleotide nucleotidyltransferase (697 aa).

Mg(2+)-binding residues include D486 and D492. Positions P553–I612 constitute a KH domain. Residues G622–K690 form the S1 motif domain.

The protein belongs to the polyribonucleotide nucleotidyltransferase family. As to quaternary structure, component of the RNA degradosome, which is a multiprotein complex involved in RNA processing and mRNA degradation. It depends on Mg(2+) as a cofactor.

It is found in the cytoplasm. It carries out the reaction RNA(n+1) + phosphate = RNA(n) + a ribonucleoside 5'-diphosphate. Functionally, involved in mRNA degradation. Catalyzes the phosphorolysis of single-stranded polyribonucleotides processively in the 3'- to 5'-direction. The chain is Polyribonucleotide nucleotidyltransferase from Baumannia cicadellinicola subsp. Homalodisca coagulata.